Reading from the N-terminus, the 185-residue chain is Threonylcarbamoyl-AMP synthase (185 aa).

One can recognise a YrdC-like domain in the interval 1–185 (MKNLNQVVDA…AKTGNTLRQG (185 aa)).

It belongs to the SUA5 family. TsaC subfamily.

It is found in the cytoplasm. It carries out the reaction L-threonine + hydrogencarbonate + ATP = L-threonylcarbamoyladenylate + diphosphate + H2O. Required for the formation of a threonylcarbamoyl group on adenosine at position 37 (t(6)A37) in tRNAs that read codons beginning with adenine. Catalyzes the conversion of L-threonine, HCO(3)(-)/CO(2) and ATP to give threonylcarbamoyl-AMP (TC-AMP) as the acyladenylate intermediate, with the release of diphosphate. The polypeptide is Threonylcarbamoyl-AMP synthase (Aliivibrio fischeri (strain ATCC 700601 / ES114) (Vibrio fischeri)).